A 179-amino-acid chain; its full sequence is Protein GrpE (179 aa).

Positions 1 to 23 are disordered; that stretch reads MSEEIKEQNVQDAQNENLAPDSV.

This sequence belongs to the GrpE family. In terms of assembly, homodimer.

It localises to the cytoplasm. Participates actively in the response to hyperosmotic and heat shock by preventing the aggregation of stress-denatured proteins, in association with DnaK and GrpE. It is the nucleotide exchange factor for DnaK and may function as a thermosensor. Unfolded proteins bind initially to DnaJ; upon interaction with the DnaJ-bound protein, DnaK hydrolyzes its bound ATP, resulting in the formation of a stable complex. GrpE releases ADP from DnaK; ATP binding to DnaK triggers the release of the substrate protein, thus completing the reaction cycle. Several rounds of ATP-dependent interactions between DnaJ, DnaK and GrpE are required for fully efficient folding. This Campylobacter curvus (strain 525.92) protein is Protein GrpE.